The following is a 279-amino-acid chain: Glutamate racemase (279 aa).

Residues 13 to 14 (DS) and 45 to 46 (YG) each bind substrate. Cys76 functions as the Proton donor/acceptor in the catalytic mechanism. 77 to 78 (NT) is a substrate binding site. The active-site Proton donor/acceptor is the Cys185. 186–187 (TH) serves as a coordination point for substrate.

This sequence belongs to the aspartate/glutamate racemases family.

It catalyses the reaction L-glutamate = D-glutamate. Its pathway is cell wall biogenesis; peptidoglycan biosynthesis. Its function is as follows. Provides the (R)-glutamate required for cell wall biosynthesis. The sequence is that of Glutamate racemase from Picosynechococcus sp. (strain ATCC 27264 / PCC 7002 / PR-6) (Agmenellum quadruplicatum).